The following is a 467-amino-acid chain: Mothers against decapentaplegic homolog 9 (467 aa).

The region spanning 16–140 (PAVKRLLGWK…YRRVETPVLP (125 aa)) is the MH1 domain. Zn(2+) contacts are provided by cysteine 68, cysteine 113, cysteine 125, and histidine 130. A disordered region spans residues 174 to 246 (NATYPDSFQQ…SETQSGQPVD (73 aa)). A compositionally biased stretch (low complexity) spans 205–220 (SYPHSPGSPSEPESPY). One can recognise an MH2 domain in the interval 273 to 467 (WCSVAYYELN…SPHNPISSVS (195 aa)).

This sequence belongs to the dwarfin/SMAD family. As to quaternary structure, interaction with the co-SMAD SMAD4. Interacts with PEBP2-alpha subunit. Interacts with RANBP3L. In terms of processing, phosphorylated on serine by BMP (bone morphogenetic proteins) type 1 receptor kinase. Expressed in heart, brain, placenta, lung, skeletal muscle, prostate, testis, ovary and small intestine. Also expressed in fetal brain, lung and kidney.

The protein localises to the cytoplasm. Its subcellular location is the nucleus. Functionally, transcriptional modulator activated by BMP (bone morphogenetic proteins) type 1 receptor kinase. SMAD9 is a receptor-regulated SMAD (R-SMAD). In Homo sapiens (Human), this protein is Mothers against decapentaplegic homolog 9 (SMAD9).